The chain runs to 167 residues: Peptide deformylase (167 aa).

Fe cation-binding residues include Cys-91 and His-133. Glu-134 is a catalytic residue. Fe cation is bound at residue His-137.

It belongs to the polypeptide deformylase family. Fe(2+) serves as cofactor.

It carries out the reaction N-terminal N-formyl-L-methionyl-[peptide] + H2O = N-terminal L-methionyl-[peptide] + formate. Its function is as follows. Removes the formyl group from the N-terminal Met of newly synthesized proteins. Requires at least a dipeptide for an efficient rate of reaction. N-terminal L-methionine is a prerequisite for activity but the enzyme has broad specificity at other positions. The sequence is that of Peptide deformylase from Neisseria gonorrhoeae (strain ATCC 700825 / FA 1090).